Here is a 313-residue protein sequence, read N- to C-terminus: NADH-ubiquinone oxidoreductase chain 1 (313 aa).

A run of 8 helical transmembrane segments spans residues 5–25 (LFMF…SVAF), 75–95 (FLYY…WVIF), 104–124 (FPYG…FMIA), 151–171 (LALI…LYFM), 175–195 (LYCW…GSSL), 227–247 (LIFL…SLIF), 251–271 (DFYS…FVWV), and 293–313 (PLSL…FSII).

This sequence belongs to the complex I subunit 1 family.

It localises to the mitochondrion inner membrane. It catalyses the reaction a ubiquinone + NADH + 5 H(+)(in) = a ubiquinol + NAD(+) + 4 H(+)(out). Core subunit of the mitochondrial membrane respiratory chain NADH dehydrogenase (Complex I) that is believed to belong to the minimal assembly required for catalysis. Complex I functions in the transfer of electrons from NADH to the respiratory chain. The immediate electron acceptor for the enzyme is believed to be ubiquinone. The sequence is that of NADH-ubiquinone oxidoreductase chain 1 (ND1) from Locusta migratoria (Migratory locust).